A 286-amino-acid chain; its full sequence is Pyridoxal kinase PdxY (286 aa).

Residues serine 9 and 44–45 contribute to the substrate site; that span reads TQ. Residues aspartate 111, alanine 143, glutamate 148, lysine 181, and 208-211 each bind ATP; that span reads RPLV. Aspartate 223 serves as a coordination point for substrate.

Belongs to the pyridoxine kinase family. PdxY subfamily. In terms of assembly, homodimer. Mg(2+) serves as cofactor.

The enzyme catalyses pyridoxal + ATP = pyridoxal 5'-phosphate + ADP + H(+). It participates in cofactor metabolism; pyridoxal 5'-phosphate salvage; pyridoxal 5'-phosphate from pyridoxal: step 1/1. Functionally, pyridoxal kinase involved in the salvage pathway of pyridoxal 5'-phosphate (PLP). Catalyzes the phosphorylation of pyridoxal to PLP. The chain is Pyridoxal kinase PdxY from Yersinia pseudotuberculosis serotype I (strain IP32953).